Here is a 133-residue protein sequence, read N- to C-terminus: Arginine decarboxylase proenzyme (133 aa).

The active-site Schiff-base intermediate with substrate; via pyruvic acid is the Ser-81. Ser-81 is modified (pyruvic acid (Ser); by autocatalysis). The Proton acceptor; for processing activity role is filled by His-86. Cys-101 (proton donor; for catalytic activity) is an active-site residue.

The protein belongs to the prokaryotic AdoMetDC family. Type 1 subfamily. As to quaternary structure, heterooctamer of four alpha and four beta chains arranged as a tetramer of alpha/beta heterodimers. Pyruvate is required as a cofactor. Is synthesized initially as an inactive proenzyme. Formation of the active enzyme involves a self-maturation process in which the active site pyruvoyl group is generated from an internal serine residue via an autocatalytic post-translational modification. Two non-identical subunits are generated from the proenzyme in this reaction, and the pyruvate is formed at the N-terminus of the alpha chain, which is derived from the carboxyl end of the proenzyme. The post-translation cleavage follows an unusual pathway, termed non-hydrolytic serinolysis, in which the side chain hydroxyl group of the serine supplies its oxygen atom to form the C-terminus of the beta chain, while the remainder of the serine residue undergoes an oxidative deamination to produce ammonia and the pyruvoyl group blocking the N-terminus of the alpha chain.

The enzyme catalyses L-arginine + H(+) = agmatine + CO2. Its pathway is amine and polyamine biosynthesis; agmatine biosynthesis; agmatine from L-arginine: step 1/1. Its function is as follows. Specifically catalyzes the decarboxylation of L-arginine to agmatine. Has no S-adenosylmethionine decarboxylase (AdoMetDC) activity. The protein is Arginine decarboxylase proenzyme of Pyrobaculum arsenaticum (strain DSM 13514 / JCM 11321 / PZ6).